The chain runs to 547 residues: Chaperonin GroEL 2 (547 aa).

Residues 29 to 32 (TLGP), 86 to 90 (DGTTT), glycine 418, 482 to 484 (NAA), and aspartate 498 each bind ATP.

Belongs to the chaperonin (HSP60) family. Forms a cylinder of 14 subunits composed of two heptameric rings stacked back-to-back. Interacts with the co-chaperonin GroES.

The protein resides in the cytoplasm. It catalyses the reaction ATP + H2O + a folded polypeptide = ADP + phosphate + an unfolded polypeptide.. Its function is as follows. Together with its co-chaperonin GroES, plays an essential role in assisting protein folding. The GroEL-GroES system forms a nano-cage that allows encapsulation of the non-native substrate proteins and provides a physical environment optimized to promote and accelerate protein folding. The protein is Chaperonin GroEL 2 of Corynebacterium efficiens (strain DSM 44549 / YS-314 / AJ 12310 / JCM 11189 / NBRC 100395).